Here is a 207-residue protein sequence, read N- to C-terminus: LexA repressor (207 aa).

A DNA-binding region (H-T-H motif) is located at residues 28-48 (VREIGEAVGLASSSTVHGHLS). Residues S129 and K167 each act as for autocatalytic cleavage activity in the active site.

This sequence belongs to the peptidase S24 family. Homodimer.

The enzyme catalyses Hydrolysis of Ala-|-Gly bond in repressor LexA.. Represses a number of genes involved in the response to DNA damage (SOS response), including recA and lexA. In the presence of single-stranded DNA, RecA interacts with LexA causing an autocatalytic cleavage which disrupts the DNA-binding part of LexA, leading to derepression of the SOS regulon and eventually DNA repair. The sequence is that of LexA repressor from Halalkalibacterium halodurans (strain ATCC BAA-125 / DSM 18197 / FERM 7344 / JCM 9153 / C-125) (Bacillus halodurans).